The following is a 325-amino-acid chain: Urease accessory protein UreD (325 aa).

This sequence belongs to the UreD family. As to quaternary structure, ureD, UreF and UreG form a complex that acts as a GTP-hydrolysis-dependent molecular chaperone, activating the urease apoprotein by helping to assemble the nickel containing metallocenter of UreC. The UreE protein probably delivers the nickel.

The protein resides in the cytoplasm. Required for maturation of urease via the functional incorporation of the urease nickel metallocenter. Functionally, expression of the urease operon increases the likelihood of bacterial survival by contributing to acid resistance in vitro and in vivo in BALB/c mice. Y.enterocolitica enters the body via an oral path and must survive the acidic stomach before being able to colonize the intestinal mucosa. In Yersinia enterocolitica, this protein is Urease accessory protein UreD.